Consider the following 169-residue polypeptide: Chorismate pyruvate-lyase (169 aa).

Met35, Arg77, Leu115, and Glu156 together coordinate substrate.

It belongs to the UbiC family. In terms of assembly, monomer.

The protein localises to the cytoplasm. The catalysed reaction is chorismate = 4-hydroxybenzoate + pyruvate. The protein operates within cofactor biosynthesis; ubiquinone biosynthesis. Functionally, removes the pyruvyl group from chorismate, with concomitant aromatization of the ring, to provide 4-hydroxybenzoate (4HB) for the ubiquinone pathway. The sequence is that of Chorismate pyruvate-lyase from Cronobacter sakazakii (strain ATCC BAA-894) (Enterobacter sakazakii).